Consider the following 81-residue polypeptide: Small ribosomal subunit protein bS18 (81 aa).

It belongs to the bacterial ribosomal protein bS18 family. As to quaternary structure, part of the 30S ribosomal subunit. Forms a tight heterodimer with protein bS6.

In terms of biological role, binds as a heterodimer with protein bS6 to the central domain of the 16S rRNA, where it helps stabilize the platform of the 30S subunit. The sequence is that of Small ribosomal subunit protein bS18 from Chlamydia muridarum (strain MoPn / Nigg).